The sequence spans 137 residues: Large-conductance mechanosensitive channel (137 aa).

Helical transmembrane passes span 10-30 and 76-96; these read FAMRGNVVDLAVGVIIGAAFG and GVFIQNVFDFLIVAFAIFMAI.

The protein belongs to the MscL family. Homopentamer.

The protein localises to the cell inner membrane. Its function is as follows. Channel that opens in response to stretch forces in the membrane lipid bilayer. May participate in the regulation of osmotic pressure changes within the cell. The protein is Large-conductance mechanosensitive channel of Escherichia coli O45:K1 (strain S88 / ExPEC).